The following is a 294-amino-acid chain: Cytidine deaminase (294 aa).

2 CMP/dCMP-type deaminase domains span residues 49-169 and 188-294; these read TPQQ…FGPA and ETQD…YIAL. Substrate is bound at residue 90–92; that stretch reads NLE. Residue His-103 participates in Zn(2+) binding. Glu-105 serves as the catalytic Proton donor. Residues Cys-130 and Cys-133 each coordinate Zn(2+).

The protein belongs to the cytidine and deoxycytidylate deaminase family. As to quaternary structure, homodimer. Requires Zn(2+) as cofactor.

It carries out the reaction cytidine + H2O + H(+) = uridine + NH4(+). The enzyme catalyses 2'-deoxycytidine + H2O + H(+) = 2'-deoxyuridine + NH4(+). This enzyme scavenges exogenous and endogenous cytidine and 2'-deoxycytidine for UMP synthesis. This Pasteurella multocida (strain Pm70) protein is Cytidine deaminase.